The sequence spans 362 residues: Peptide chain release factor 1 (362 aa).

An N5-methylglutamine modification is found at Gln237.

It belongs to the prokaryotic/mitochondrial release factor family. In terms of processing, methylated by PrmC. Methylation increases the termination efficiency of RF1.

The protein resides in the cytoplasm. Functionally, peptide chain release factor 1 directs the termination of translation in response to the peptide chain termination codons UAG and UAA. This is Peptide chain release factor 1 from Vibrio campbellii (strain ATCC BAA-1116).